Consider the following 338-residue polypeptide: Phosphoribosylformylglycinamidine cyclo-ligase (338 aa).

The protein belongs to the AIR synthase family.

The protein resides in the cytoplasm. The catalysed reaction is 2-formamido-N(1)-(5-O-phospho-beta-D-ribosyl)acetamidine + ATP = 5-amino-1-(5-phospho-beta-D-ribosyl)imidazole + ADP + phosphate + H(+). Its pathway is purine metabolism; IMP biosynthesis via de novo pathway; 5-amino-1-(5-phospho-D-ribosyl)imidazole from N(2)-formyl-N(1)-(5-phospho-D-ribosyl)glycinamide: step 2/2. This is Phosphoribosylformylglycinamidine cyclo-ligase from Thermoplasma volcanium (strain ATCC 51530 / DSM 4299 / JCM 9571 / NBRC 15438 / GSS1).